Consider the following 468-residue polypeptide: Interleukin-9 receptor (468 aa).

Positions 1–37 are cleaved as a signal peptide; sequence MALGRCIAEGWTLERVAVKQVSWFLIYSWVCSGVCRG. At 38-270 the chain is on the extracellular side; that stretch reads VSVPEQGGGG…GLLVPRWQWS (233 aa). N116 and N155 each carry an N-linked (GlcNAc...) asparagine glycan. A Fibronectin type-III domain is found at 148-256; sequence PPSDLQSNVS…WSQPVSFPSP (109 aa). Residues 244-248 carry the WSXWS motif motif; that stretch reads WSEWS. The chain crosses the membrane as a helical span at residues 271–291; that stretch reads ASILVVVPIFLLLTGFVHLLF. The Cytoplasmic segment spans residues 292-468; that stretch reads KLSPRLKRIF…PVALPVSSRA (177 aa). Residues 301–309 carry the Box 1 motif motif; that stretch reads FYQNIPSPE. Residues 407–426 form a disordered region; sequence PQEDWAPLGSARPPPPDSDS.

It belongs to the type I cytokine receptor family. Type 4 subfamily. In terms of assembly, interacts with IL9.

The protein localises to the cell membrane. The protein resides in the secreted. In terms of biological role, plays an important role in the immune response against parasites by acting as a receptor of IL9. This chain is Interleukin-9 receptor (Il9r), found in Mus musculus (Mouse).